The chain runs to 485 residues: Adenosylhomocysteinase (485 aa).

3 residues coordinate substrate: threonine 60, aspartate 146, and glutamate 208. 209-211 (TTT) is an NAD(+) binding site. Residues lysine 238 and aspartate 242 each coordinate substrate. Residues asparagine 243, 272-277 (GYGDVG), glutamate 295, asparagine 330, 351-353 (IGH), and asparagine 399 contribute to the NAD(+) site.

The protein belongs to the adenosylhomocysteinase family. It depends on NAD(+) as a cofactor.

The protein localises to the cytoplasm. The catalysed reaction is S-adenosyl-L-homocysteine + H2O = L-homocysteine + adenosine. The protein operates within amino-acid biosynthesis; L-homocysteine biosynthesis; L-homocysteine from S-adenosyl-L-homocysteine: step 1/1. Functionally, may play a key role in the regulation of the intracellular concentration of adenosylhomocysteine. This is Adenosylhomocysteinase from Streptomyces griseus subsp. griseus (strain JCM 4626 / CBS 651.72 / NBRC 13350 / KCC S-0626 / ISP 5235).